Reading from the N-terminus, the 105-residue chain is UPF0145 protein Mevan_1624 (105 aa).

The protein belongs to the UPF0145 family.

The chain is UPF0145 protein Mevan_1624 from Methanococcus vannielii (strain ATCC 35089 / DSM 1224 / JCM 13029 / OCM 148 / SB).